The following is a 206-amino-acid chain: Small ribosomal subunit protein uS4 (206 aa).

Residues 96 to 156 enclose the S4 RNA-binding domain; it reads GRLDNVVYRM…EKAKQQARIK (61 aa).

This sequence belongs to the universal ribosomal protein uS4 family. Part of the 30S ribosomal subunit. Contacts protein S5. The interaction surface between S4 and S5 is involved in control of translational fidelity.

Functionally, one of the primary rRNA binding proteins, it binds directly to 16S rRNA where it nucleates assembly of the body of the 30S subunit. In terms of biological role, with S5 and S12 plays an important role in translational accuracy. This Vibrio campbellii (strain ATCC BAA-1116) protein is Small ribosomal subunit protein uS4.